A 52-amino-acid polypeptide reads, in one-letter code: Large ribosomal subunit protein eL39 (52 aa).

This sequence belongs to the eukaryotic ribosomal protein eL39 family.

In Caldivirga maquilingensis (strain ATCC 700844 / DSM 13496 / JCM 10307 / IC-167), this protein is Large ribosomal subunit protein eL39.